The primary structure comprises 217 residues: Ribulose-phosphate 3-epimerase (217 aa).

Ser7 is a binding site for substrate. Positions 32, 34, and 65 each coordinate a divalent metal cation. Catalysis depends on Asp34, which acts as the Proton acceptor. Substrate contacts are provided by residues His65, 141–144 (GFGG), 175–177 (DGG), and 197–198 (GS). Asp175 is an a divalent metal cation binding site. The active-site Proton donor is Asp175.

It belongs to the ribulose-phosphate 3-epimerase family. Requires a divalent metal cation as cofactor.

The enzyme catalyses D-ribulose 5-phosphate = D-xylulose 5-phosphate. The protein operates within carbohydrate degradation. Its function is as follows. Catalyzes the reversible epimerization of D-ribulose 5-phosphate to D-xylulose 5-phosphate. This Bacillus subtilis (strain 168) protein is Ribulose-phosphate 3-epimerase.